The chain runs to 468 residues: Trehalose-2-sulfate acyltransferase PapA2 (468 aa).

The protein belongs to the PapA acyltransferase family.

The catalysed reaction is 2-O-sulfo-alpha,alpha-trehalose + hexadecanoyl-CoA = 2-O-sulfo-2'-O-hexadecanoyl-alpha,alpha-trehalose + CoA. Functionally, catalyzes the acylation of trehalose-2-sulfate by adding the palmitoyl group at the 2'-position to yield the intermediate trehalose-2-sulfate-2'-palmitate (SL659). This Mycobacterium tuberculosis (strain ATCC 25177 / H37Ra) protein is Trehalose-2-sulfate acyltransferase PapA2 (papA2).